The chain runs to 2335 residues: Serine/threonine-protein kinase tor1 (2335 aa).

HEAT repeat units follow at residues 1-31 (MEYFSDLKNKNESIQLAAADQLKEFVHSSTK), 164-201 (LYISEIFQNLWTGLRDPKPLIRETAADALGASLDVVCQ), 331-371 (PYLQ…AVKL), 410-449 (PIQERLLNMVSQILTGKNFEIRTNDTYTPSFTNIYSAREP), 474-512 (YSLISFIQESVLSYLENDNSEIRIAAARTCCQVFARDPI), 522-560 (ESVAEVLEKLLTLGIADSDPKIRETVLSLLDERFDRHLA), 562-596 (PDNIRCLFIALNDEVFSIREIAIIIIGRLALYNPA), 642-679 (PYIQSIIHVILPKAADTSPGVSSAIISALGELASVEGE), 684-722 (DVRGSFMKLILVNLQDQSSTLKRLASLKCLRKLCGRSGY), 728-766 (LDYPPLLGALIGILQSEQPTPIRREVLRTLGVLGALDPY), 843-880 (VFLPQVVPTFLQVMQSLSASSAEFYFQQLTTLTSIIGP), 904-923 (LLVILELIDAIAIALQDEFK), 924-961 (FYLPQILSCMLKAFSLDNTSSRSVSYKVLQSFVIFGSN), 964-1003 (EYMHLVLPVIIRSFERDTIPLGFRKSALKCIAQLFQSVNF), and 1005-1042 (DHASRIIHPLVRMLGKSNGDLRAVIMDTLCAIVSQLGY). An FAT domain is found at 1226 to 1781 (VISAHASKCN…VYSLTVSSKS (556 aa)). Positions 1955-2269 (FHHTFEVISS…ARHADYAALS (315 aa)) constitute a PI3K/PI4K catalytic domain. The interval 1961–1967 (VISSKQR) is G-loop. Position 1972 is a phosphothreonine; by PKB/AKT1 (T1972). The catalytic loop stretch occupies residues 2134–2142 (GLGDRHPSN). Residues 2154–2179 (HIDFGDCFEVAMHREKFPEKIPFRLT) are activation loop. The 33-residue stretch at 2303-2335 (EQLPVKAQVEKLIQQATAPENLCRCYVGWCSFW) folds into the FATC domain.

It belongs to the PI3/PI4-kinase family. As to quaternary structure, the target of rapamycin complex 2 (TORC2) is composed of at least bit61, pop3/wat1, sin1, ste20 and tor1. Post-translationally, phosphorylation at Thr-1972 in the ATP-binding region by AKT1 strongly reduces kinase activity.

The protein localises to the cytoplasm. It carries out the reaction L-seryl-[protein] + ATP = O-phospho-L-seryl-[protein] + ADP + H(+). The catalysed reaction is L-threonyl-[protein] + ATP = O-phospho-L-threonyl-[protein] + ADP + H(+). Functionally, catalytic component of TORC2, which regulates multiple cellular processes to control cell growth in response to environmental signals. In response to signals, TORC2 phosphorylates AGC protein kinase family members. TORC2 is required for cell survival under various stress conditions. TORC2 positively controls G1 cell-cycle arrest, sexual development and amino acid uptake. Positively regulates amino acid uptake through the control of expression of amino acid permeases. Responsible for the phosphorylation of AGC kinase gad8 at 'Ser-527' and 'Ser-546', activating gad8 kinase activity and promoting sexual development. In Schizosaccharomyces pombe (strain 972 / ATCC 24843) (Fission yeast), this protein is Serine/threonine-protein kinase tor1.